The chain runs to 826 residues: G-protein coupled receptor-associated sorting protein 2 (826 aa).

4 disordered regions span residues 1-126, 204-286, 336-371, and 506-534; these read MTGA…AQAW, WCYP…NPFC, EGNRFRRRDKEEPNKTLKNENEKDVKNDETVEQESR, and IPEGASGNSEEKAKNAELGAEGEEQDSVA. The span at 13 to 31 shows a compositional bias: basic and acidic residues; it reads KPDKKPQEEVAGGAERESE. Residues 59–73 show a composition bias toward polar residues; that stretch reads SSRARPKTETQSVSG. Over residues 231–247 the composition is skewed to basic and acidic residues; it reads TREETSIRSWPREEVNT. The segment covering 248–264 has biased composition (basic residues); that stretch reads RSRHRAKHQTNARSKPR. A phosphoserine mark is found at Ser-275 and Ser-277.

It belongs to the GPRASP family. In terms of assembly, interacts with cytoplasmic tails of a variety of G-protein coupled receptors such as muscarinic acetylcholine receptor M1/CHRM1 and calcitonin receptor/CALCR. Strongly expressed in the brain and the cochlea. Also in lung and muscle tissues. Localized in multiple structures of the cochlea, detected in the spiral ganglion, stria vascularis, spiral ligament, inner and outer hair cells.

Its function is as follows. May play a role in regulation of a variety of G-protein coupled receptors. This Mus musculus (Mouse) protein is G-protein coupled receptor-associated sorting protein 2 (Gprasp2).